The chain runs to 249 residues: Proteasome activator complex subunit 1 (249 aa).

The segment at 60–101 (PLDIPVPDPVKEKEKGERKKQQEKEDKDEKKKGEDEDKGPPC) is disordered. The span at 68 to 98 (PVKEKEKGERKKQQEKEDKDEKKKGEDEDKG) shows a compositional bias: basic and acidic residues.

Belongs to the PA28 family. Heterodimer of PSME1 and PSME2, which forms a hexameric ring. PSME1 can form homoheptamers.

Implicated in immunoproteasome assembly and required for efficient antigen processing. The PA28 activator complex enhances the generation of class I binding peptides by altering the cleavage pattern of the proteasome. This chain is Proteasome activator complex subunit 1 (PSME1), found in Macaca fascicularis (Crab-eating macaque).